The primary structure comprises 103 residues: Large ribosomal subunit protein eL21 (103 aa).

This sequence belongs to the eukaryotic ribosomal protein eL21 family.

The polypeptide is Large ribosomal subunit protein eL21 (Sulfurisphaera tokodaii (strain DSM 16993 / JCM 10545 / NBRC 100140 / 7) (Sulfolobus tokodaii)).